The following is a 341-amino-acid chain: AB hydrolase superfamily protein C1039.03 (341 aa).

It belongs to the AB hydrolase superfamily.

It localises to the cytoplasm. The protein resides in the nucleus. The protein is AB hydrolase superfamily protein C1039.03 of Schizosaccharomyces pombe (strain 972 / ATCC 24843) (Fission yeast).